The sequence spans 145 residues: Histone H2B (145 aa).

The interval Met-1–Lys-52 is disordered. 3 positions are modified to N6-acetyllysine: Lys-9, Lys-35, and Lys-36. Residues Lys-10–Pro-44 are compositionally biased toward basic and acidic residues. Lys-141 participates in a covalent cross-link: Glycyl lysine isopeptide (Lys-Gly) (interchain with G-Cter in ubiquitin).

Belongs to the histone H2B family. As to quaternary structure, the nucleosome is a histone octamer containing two molecules each of H2A, H2B, H3 and H4 assembled in one H3-H4 heterotetramer and two H2A-H2B heterodimers. The octamer wraps approximately 147 bp of DNA. Post-translationally, can be acetylated to form H2BK6ac, H2BK33ac and H2BK34ac. Monoubiquitinated to form H2BK143ub1; may give a specific tag for epigenetic transcriptional activation. In anthers, floral buds, pollen, petals and fruits.

It is found in the nucleus. The protein localises to the chromosome. Its function is as follows. Core component of nucleosome. Nucleosomes wrap and compact DNA into chromatin, limiting DNA accessibility to the cellular machineries which require DNA as a template. Histones thereby play a central role in transcription regulation, DNA repair, DNA replication and chromosomal stability. DNA accessibility is regulated via a complex set of post-translational modifications of histones, also called histone code, and nucleosome remodeling. The polypeptide is Histone H2B (HIS2B) (Capsicum annuum (Capsicum pepper)).